Reading from the N-terminus, the 197-residue chain is Dephospho-CoA kinase (197 aa).

The DPCK domain maps to 2-197; it reads IIGLTGGIAS…GAIKDLANLV (196 aa). ATP is bound at residue 10–15; it reads ASGKST.

The protein belongs to the CoaE family.

The protein resides in the cytoplasm. The catalysed reaction is 3'-dephospho-CoA + ATP = ADP + CoA + H(+). It functions in the pathway cofactor biosynthesis; coenzyme A biosynthesis; CoA from (R)-pantothenate: step 5/5. Catalyzes the phosphorylation of the 3'-hydroxyl group of dephosphocoenzyme A to form coenzyme A. The chain is Dephospho-CoA kinase from Streptococcus thermophilus (strain CNRZ 1066).